A 172-amino-acid chain; its full sequence is uncharacterized protein (172 aa).

Belongs to the flavoredoxin family. The cofactor is FMN.

This is an uncharacterized protein from Pyrococcus horikoshii (strain ATCC 700860 / DSM 12428 / JCM 9974 / NBRC 100139 / OT-3).